A 422-amino-acid polypeptide reads, in one-letter code: Serine--tRNA ligase (422 aa).

Residue 230-232 (TAE) participates in L-serine binding. 261–263 (RAE) lines the ATP pocket. L-serine is bound at residue Glu-284. 348 to 351 (EISS) provides a ligand contact to ATP. Ser-383 is an L-serine binding site.

Belongs to the class-II aminoacyl-tRNA synthetase family. Type-1 seryl-tRNA synthetase subfamily. Homodimer. The tRNA molecule binds across the dimer.

It localises to the cytoplasm. The enzyme catalyses tRNA(Ser) + L-serine + ATP = L-seryl-tRNA(Ser) + AMP + diphosphate + H(+). It catalyses the reaction tRNA(Sec) + L-serine + ATP = L-seryl-tRNA(Sec) + AMP + diphosphate + H(+). The protein operates within aminoacyl-tRNA biosynthesis; selenocysteinyl-tRNA(Sec) biosynthesis; L-seryl-tRNA(Sec) from L-serine and tRNA(Sec): step 1/1. Catalyzes the attachment of serine to tRNA(Ser). Is also able to aminoacylate tRNA(Sec) with serine, to form the misacylated tRNA L-seryl-tRNA(Sec), which will be further converted into selenocysteinyl-tRNA(Sec). This is Serine--tRNA ligase from Pelotomaculum thermopropionicum (strain DSM 13744 / JCM 10971 / SI).